The sequence spans 132 residues: Small ribosomal subunit protein uS8c (132 aa).

The protein belongs to the universal ribosomal protein uS8 family. Part of the 30S ribosomal subunit.

It is found in the plastid. The protein localises to the chloroplast. Its function is as follows. One of the primary rRNA binding proteins, it binds directly to 16S rRNA central domain where it helps coordinate assembly of the platform of the 30S subunit. This Pinus thunbergii (Japanese black pine) protein is Small ribosomal subunit protein uS8c (rps8).